A 113-amino-acid chain; its full sequence is Molt-inhibiting hormone (113 aa).

Residues 1-35 (MMSLAHSKFSCQRTRLLAVVLLAALWSSSLQQAAA) form the signal peptide. 3 cysteine pairs are disulfide-bonded: cysteine 42-cysteine 79, cysteine 59-cysteine 75, and cysteine 62-cysteine 88.

It belongs to the arthropod CHH/MIH/GIH/VIH hormone family.

It localises to the secreted. Functionally, inhibits Y-organs where molting hormone (ecdysteroid) is secreted. A molting cycle is initiated when MIH secretion diminishes or stops. The chain is Molt-inhibiting hormone from Callinectes sapidus (Blue crab).